The sequence spans 265 residues: Undecaprenyl-diphosphatase (265 aa).

The next 7 helical transmembrane spans lie at E42–F62, I90–F110, V115–I135, V160–L182, F195–V215, I222–V242, and K245–L265.

The protein belongs to the UppP family.

The protein localises to the cell membrane. The catalysed reaction is di-trans,octa-cis-undecaprenyl diphosphate + H2O = di-trans,octa-cis-undecaprenyl phosphate + phosphate + H(+). Functionally, catalyzes the dephosphorylation of undecaprenyl diphosphate (UPP). This is Undecaprenyl-diphosphatase from Methanococcoides burtonii (strain DSM 6242 / NBRC 107633 / OCM 468 / ACE-M).